A 197-amino-acid polypeptide reads, in one-letter code: Protein tyrosine phosphatase receptor type C-associated protein (197 aa).

Residues V33–A53 traverse the membrane as a helical segment. A phosphoserine mark is found at S99 and S103. Disordered stretches follow at residues G120–A164 and S177–L197. Over residues A124–D145 the composition is skewed to basic and acidic residues.

In terms of assembly, interacts with CD45/PTPRC. Phosphorylated on tyrosine residues. In terms of tissue distribution, leukocyte-specific. Expressed in B- and T-cell lines, in spleen, thymus, and bone marrow of adult mice, and in embryos.

The protein resides in the membrane. This Mus musculus (Mouse) protein is Protein tyrosine phosphatase receptor type C-associated protein (Ptprcap).